Consider the following 363-residue polypeptide: MNYQILARKWRPQSFKKIIGQKYIVKAISNGFSLGKIHHAWLLSGTRGVGKTTIARLIAKSLNCEIGITSLPCRKCTICQEIEKGICLDFIEIDAASRTKVEEIREILDNIYYTPSKSRFKVYLIDEVHMLSRHSFNALLKTLEEPPQHIKFILATTDVEKIPKTIRSRCLHFKLNILSEEDIFNFLKHILKKGGNNFDEEALKIISDYANGSMRDALNLLEHAMHLSKNNINLKNTTEMLGIPNKKHAFLLTKFLLEQDSKKMMCLLNKISKIGLEWQNILIEMMRFLHHIAMLKSYPKIWNQIFIKNNENEIKKIAENNSKYNIQLCYKILLKGRKELFFSPNHKMGVEMILLQAITEIKR.

45-52 (GTRGVGKT) serves as a coordination point for ATP. The Zn(2+) site is built by C64, C73, C76, and C79.

It belongs to the DnaX/STICHEL family. In terms of assembly, DNA polymerase III contains a core (composed of alpha, epsilon and theta chains) that associates with a tau subunit. This core dimerizes to form the POLIII' complex. PolIII' associates with the gamma complex (composed of gamma, delta, delta', psi and chi chains) and with the beta chain to form the complete DNA polymerase III complex.

It carries out the reaction DNA(n) + a 2'-deoxyribonucleoside 5'-triphosphate = DNA(n+1) + diphosphate. DNA polymerase III is a complex, multichain enzyme responsible for most of the replicative synthesis in bacteria. This DNA polymerase also exhibits 3' to 5' exonuclease activity. This Buchnera aphidicola subsp. Schizaphis graminum (strain Sg) protein is DNA polymerase III subunit gamma (dnaX).